The primary structure comprises 342 residues: uncharacterized protein (342 aa).

This sequence belongs to the cycloisomerase 2 family.

This is an uncharacterized protein from Staphylococcus aureus (strain NCTC 8325 / PS 47).